Consider the following 84-residue polypeptide: Beta-cardiotoxin CTX21 (84 aa).

The N-terminal stretch at 1-21 (MKTLLLTLVVVTIVCLDLGYT) is a signal peptide. 4 disulfide bridges follow: C24–C43, C36–C61, C65–C76, and C77–C82.

It belongs to the three-finger toxin family. Short-chain subfamily. Aminergic toxin sub-subfamily. As to expression, expressed by the venom gland.

It localises to the secreted. In terms of biological role, acts as a beta-blocker by binding to beta-1 and beta-2 adrenergic receptors (ADRB1 and ADRB2). It dose-dependently decreases the heart rate (bradycardia), whereas conventional cardiotoxins increases it. At 100 mg/kg, intraperitoneal injection into mice provokes labored breathing, impaired locomotion, lack of response to external stimuli, and death (after 30 minutes). This Ophiophagus hannah (King cobra) protein is Beta-cardiotoxin CTX21.